A 54-amino-acid polypeptide reads, in one-letter code: Ovomucoid (54 aa).

The 51-residue stretch at 4-54 (VDCSDYPKPVCSLEYMPLCGSDSKTYSNKCDFCNAFVDSNGTLSLSHFGKC) folds into the Kazal-like domain. 3 disulfide bridges follow: cysteine 6/cysteine 36, cysteine 14/cysteine 33, and cysteine 22/cysteine 54. Residue asparagine 43 is glycosylated (N-linked (GlcNAc...) asparagine).

The protein resides in the secreted. This chain is Ovomucoid, found in Circus aeruginosus (Western marsh harrier).